Consider the following 273-residue polypeptide: Glutamate 5-kinase (273 aa).

ATP is bound at residue K15. S55, D142, and N158 together coordinate substrate. ATP is bound by residues 178–179 and 220–226; these read SD and TGGMLSK.

Belongs to the glutamate 5-kinase family.

The protein resides in the cytoplasm. It catalyses the reaction L-glutamate + ATP = L-glutamyl 5-phosphate + ADP. The protein operates within amino-acid biosynthesis; L-proline biosynthesis; L-glutamate 5-semialdehyde from L-glutamate: step 1/2. Its function is as follows. Catalyzes the transfer of a phosphate group to glutamate to form L-glutamate 5-phosphate. The chain is Glutamate 5-kinase from Streptococcus pyogenes serotype M2 (strain MGAS10270).